The primary structure comprises 230 residues: ATP synthase subunit a (230 aa).

The next 6 membrane-spanning stretches (helical) occupy residues 16-36 (LVLF…WLSI), 73-93 (WVSA…LGLL), 106-126 (TYSI…YLAF), 142-162 (LIPF…IALG), 165-185 (LAAN…AIWT), and 192-212 (IASI…GVAC).

The protein belongs to the ATPase A chain family. F-type ATPases have 2 components, CF(1) - the catalytic core - and CF(0) - the membrane proton channel. CF(1) has five subunits: alpha(3), beta(3), gamma(1), delta(1), epsilon(1). CF(0) has three main subunits: a, b and c.

It is found in the mitochondrion inner membrane. In terms of biological role, mitochondrial membrane ATP synthase (F(1)F(0) ATP synthase or Complex V) produces ATP from ADP in the presence of a proton gradient across the membrane which is generated by electron transport complexes of the respiratory chain. F-type ATPases consist of two structural domains, F(1) - containing the extramembraneous catalytic core and F(0) - containing the membrane proton channel, linked together by a central stalk and a peripheral stalk. During catalysis, ATP synthesis in the catalytic domain of F(1) is coupled via a rotary mechanism of the central stalk subunits to proton translocation. Key component of the proton channel; it may play a direct role in the translocation of protons across the membrane. This is ATP synthase subunit a (ATP6) from Patiria pectinifera (Starfish).